The primary structure comprises 94 residues: Conotoxin Im026 (94 aa).

A signal peptide spans 1–24 (MRLTTMHSVILMLLLVFAFDNVDG). Positions 25–59 (DEPGQTARDVDNRNFMSILRSEGKPVHFLRAIKKR) are excised as a propeptide.

Contains 4 disulfide bonds. In terms of tissue distribution, expressed by the venom duct.

It is found in the secreted. Its function is as follows. Probable neurotoxin. The protein is Conotoxin Im026 of Conus imperialis (Imperial cone).